Here is a 430-residue protein sequence, read N- to C-terminus: KIN17-like protein (430 aa).

A C2H2-type zinc finger spans residues 28-50 (CQMCQKQCRDENGFKCHCMSESH). Residues 51–160 (QRQMQVFGQA…KARLKRKRIK (110 aa)) form a winged helix-turn-helix (wHTH) region. The stretch at 147 to 183 (EQAVKARLKRKRIKSDLAEDERQERMIARQIERAQQS) forms a coiled coil. A Nuclear localization signal (NLS) motif is present at residues 155–158 (KRKR). Disordered regions lie at residues 179–230 (RAQQ…ANKA) and 261–284 (EEED…GKDA). Acidic residues predominate over residues 209 to 224 (EYSDSENDHEGQEEDA). Residues 261–278 (EEEDEVSARDKEKEELAK) are compositionally biased toward basic and acidic residues. Residues 283–312 (DAINAAEARRSALDELMKEEEKAKERSNRK) adopt a coiled-coil conformation. The C-terminal subdomain A stretch occupies residues 319–370 (GIVVKVMSKSLAEKGYCKQKGVVKRVIDKYVGEIEMLESKHVLRVDQDELET). Residues 376–427 (GGLVRIVNGAYRGSNARLLSVDTERFCAKVQVEKGLYDGKVLKAIEYEDICK) form a C-terminal subdomain B region.

It belongs to the KIN17 family.

The protein localises to the nucleus. This is KIN17-like protein from Oryza sativa subsp. indica (Rice).